A 60-amino-acid chain; its full sequence is Putative mercuric resistance protein (60 aa).

The chain is Putative mercuric resistance protein from Pseudomonas aeruginosa.